A 777-amino-acid chain; its full sequence is Phosphate transporter PHO1 homolog 10 (777 aa).

An SPX domain is found at 1–322; sequence MKFGKIFKKQ…SRNASRNYMK (322 aa). Residues 1–372 lie on the Cytoplasmic side of the membrane; it reads MKFGKIFKKQ…RPKVKRERHR (372 aa). The helical transmembrane segment at 373 to 393 threads the bilayer; the sequence is VTFFSGFFSGCSIALVIAVVF. Residues 394–408 are Extracellular-facing; sequence KIESRKIMEKNYGTE. Residues 409–429 traverse the membrane as a helical segment; it reads YMANIIPLYSLFGFIILHMLM. Residues 430-459 lie on the Cytoplasmic side of the membrane; it reads YSANIYFWKRYRVNYTFIFGFKQGTELGDR. The chain crosses the membrane as a helical span at residues 460–480; the sequence is EVFLVSTGLAVLAFVCFLLNL. Topologically, residues 481–496 are extracellular; the sequence is QLDMDWRMKHHKTLPE. Residues 497–517 traverse the membrane as a helical segment; sequence VIPLCLATIVLFILFCPFNII. The Cytoplasmic segment spans residues 518–646; that stretch reads YRSSRFFFIR…YELKKGRTWM (129 aa). The EXS domain maps to 581–775; it reads HSHGVYNAFY…HYYDDDDVDK (195 aa). The chain crosses the membrane as a helical span at residues 647–667; it reads ILALVSSGVATGMNTFWDIVI. Topologically, residues 668–691 are extracellular; it reads DWGLLRKHSKNPYLRDKLLVPHKS. The chain crosses the membrane as a helical span at residues 692–712; that stretch reads VYFAAMVVNVILRVAWMQLVL. The Cytoplasmic segment spans residues 713–777; that stretch reads EFNLKSLHKI…YDDDDVDKDD (65 aa).

The protein belongs to the SYG1 (TC 2.A.94) family. Expressed in root epidermis and cortex, leaf blades and hydathodes, stems and flowers.

It localises to the cell membrane. In terms of biological role, may transport inorganic phosphate (Pi). This Arabidopsis thaliana (Mouse-ear cress) protein is Phosphate transporter PHO1 homolog 10 (PHO1-H10).